The chain runs to 237 residues: MVTVREEMRKGPWTEQEDLQLVCTVRLFGDRRWDFVAKVSGLNRTGKSCRLRWVNYLHPGLKHGRMSPKEEHLIIELHARWGNRWSRIARRLPGRTDNEIKNYWRTHMRKKAQERRGDMSPSSSSSSLVYQSCLLDTVPIISMDGGDIHDDRSCMARVLKSTQSVMDGYTMDQIWKEIEAPGAPSLLGIDEGKDKACSNLPCPLLTSTMSDYSCPEVFWKIDNEETRMLATQSGYGK.

HTH myb-type domains are found at residues 5 to 57 and 58 to 112; these read REEM…VNYL and HPGL…RKKA. The segment at residues 33-57 is a DNA-binding region (H-T-H motif); sequence WDFVAKVSGLNRTGKSCRLRWVNYL. Positions 62-65 match the Bipartite nuclear localization signal 1 motif; it reads KHGR. The H-T-H motif DNA-binding region spans 85–108; sequence WSRIARRLPGRTDNEIKNYWRTHM. A Bipartite nuclear localization signal 2 motif is present at residues 109 to 117; the sequence is RKKAQERRG.

It localises to the nucleus. Transcription factor. In Oryza sativa subsp. japonica (Rice), this protein is Myb-related protein MYBAS1 (MYBAS1).